A 283-amino-acid chain; its full sequence is Formamidopyrimidine-DNA glycosylase (283 aa).

Proline 2 serves as the catalytic Schiff-base intermediate with DNA. The active-site Proton donor is the glutamate 3. The active-site Proton donor; for beta-elimination activity is lysine 58. DNA is bound by residues histidine 100, arginine 119, and lysine 162. An FPG-type zinc finger spans residues 247–283 (RVYGREGQRCQTPDCAEKILRKVQSGRSSFYCPACQR). Arginine 273 acts as the Proton donor; for delta-elimination activity in catalysis.

It belongs to the FPG family. As to quaternary structure, monomer. Zn(2+) serves as cofactor.

The catalysed reaction is Hydrolysis of DNA containing ring-opened 7-methylguanine residues, releasing 2,6-diamino-4-hydroxy-5-(N-methyl)formamidopyrimidine.. It carries out the reaction 2'-deoxyribonucleotide-(2'-deoxyribose 5'-phosphate)-2'-deoxyribonucleotide-DNA = a 3'-end 2'-deoxyribonucleotide-(2,3-dehydro-2,3-deoxyribose 5'-phosphate)-DNA + a 5'-end 5'-phospho-2'-deoxyribonucleoside-DNA + H(+). Its function is as follows. Involved in base excision repair of DNA damaged by oxidation or by mutagenic agents. Acts as a DNA glycosylase that recognizes and removes damaged bases. Has a preference for oxidized purines, such as 7,8-dihydro-8-oxoguanine (8-oxoG). Has AP (apurinic/apyrimidinic) lyase activity and introduces nicks in the DNA strand. Cleaves the DNA backbone by beta-delta elimination to generate a single-strand break at the site of the removed base with both 3'- and 5'-phosphates. This chain is Formamidopyrimidine-DNA glycosylase, found in Jannaschia sp. (strain CCS1).